Here is a 430-residue protein sequence, read N- to C-terminus: MASDLRISFQGEPSRNDPGSENLEHKPSQGPAVQEEEETYEFLRTQLSLLQNSNNSCARQELQNLYKLFHSWLQPEKHSKDEIISCLVLEQFMINGHCSDRSMLKEKWNASGRNLEKFMEDLTDESMKPPGLVHVHMQGQEALFSENMPLKEVIVHLTKQLSVGSPTGTDMETPSWTPQDTSLETGQGEWGDKENGDNIYHINDSITSQGNEIPSLLIIREEDYPRPEEDSVSLKNPLSSRKAGLGMSGSQEGSLKGPSYQDVLMEGGPGFLSQSIQVSPEPVPTHQRTEGNSTRGGHQERCREAQNSYRCEKCPKIFRYFSQLKAHQRRHNNERTFTCAECNRGFFQASDLHVHQKIHAEEKPFTCSTCEKSFSHKTNLLAHERIHTGEKPYECSLCHRSYRQSSTYHRHLRNHQKSAFRGVSSTPEAS.

Residues 1–38 (MASDLRISFQGEPSRNDPGSENLEHKPSQGPAVQEEEE) are disordered. The SCAN box domain occupies 44-126 (RTQLSLLQNS…KFMEDLTDES (83 aa)). The span at 164-185 (GSPTGTDMETPSWTPQDTSLET) shows a compositional bias: polar residues. Disordered regions lie at residues 164–196 (GSPT…KENG), 224–257 (YPRP…SLKG), and 281–300 (EPVP…GHQE). 4 C2H2-type zinc fingers span residues 309–331 (YRCE…QRRH), 337–359 (FTCA…QKIH), 365–387 (FTCS…ERIH), and 393–415 (YECS…LRNH).

Its subcellular location is the nucleus. It is found in the chromosome. The protein resides in the telomere. In terms of biological role, embryonic stem (ES) cell-specific transcription factor required to regulate ES cell pluripotency. Binds telomeres and plays a key role in genomic stability in ES cells by regulating telomere elongation. Acts as an activator of spontaneous telomere sister chromatid exchange (T-SCE) and telomere elongation in undifferentiated ES cells. This Ailuropoda melanoleuca (Giant panda) protein is Zinc finger and SCAN domain-containing protein 4 (ZSCAN4).